A 314-amino-acid polypeptide reads, in one-letter code: Aspartate carbamoyltransferase catalytic subunit (314 aa).

The carbamoyl phosphate site is built by Arg55 and Thr56. An L-aspartate-binding site is contributed by Lys83. Residues Arg105, His139, and Gln142 each coordinate carbamoyl phosphate. 2 residues coordinate L-aspartate: Arg172 and Arg226. Carbamoyl phosphate is bound by residues Gly267 and Pro268.

It belongs to the aspartate/ornithine carbamoyltransferase superfamily. ATCase family. In terms of assembly, heterododecamer (2C3:3R2) of six catalytic PyrB chains organized as two trimers (C3), and six regulatory PyrI chains organized as three dimers (R2).

It carries out the reaction carbamoyl phosphate + L-aspartate = N-carbamoyl-L-aspartate + phosphate + H(+). It functions in the pathway pyrimidine metabolism; UMP biosynthesis via de novo pathway; (S)-dihydroorotate from bicarbonate: step 2/3. Functionally, catalyzes the condensation of carbamoyl phosphate and aspartate to form carbamoyl aspartate and inorganic phosphate, the committed step in the de novo pyrimidine nucleotide biosynthesis pathway. In Rhodococcus opacus (strain B4), this protein is Aspartate carbamoyltransferase catalytic subunit.